Here is a 179-residue protein sequence, read N- to C-terminus: Large ribosomal subunit protein uL5 (179 aa).

The protein belongs to the universal ribosomal protein uL5 family. As to quaternary structure, part of the 50S ribosomal subunit; part of the 5S rRNA/L5/L18/L25 subcomplex. Contacts the 5S rRNA and the P site tRNA. Forms a bridge to the 30S subunit in the 70S ribosome.

In terms of biological role, this is one of the proteins that bind and probably mediate the attachment of the 5S RNA into the large ribosomal subunit, where it forms part of the central protuberance. In the 70S ribosome it contacts protein S13 of the 30S subunit (bridge B1b), connecting the 2 subunits; this bridge is implicated in subunit movement. Contacts the P site tRNA; the 5S rRNA and some of its associated proteins might help stabilize positioning of ribosome-bound tRNAs. This is Large ribosomal subunit protein uL5 from Neisseria gonorrhoeae (strain ATCC 700825 / FA 1090).